We begin with the raw amino-acid sequence, 876 residues long: Alanine--tRNA ligase (876 aa).

Zn(2+)-binding residues include histidine 560, histidine 564, cysteine 662, and histidine 666.

It belongs to the class-II aminoacyl-tRNA synthetase family. It depends on Zn(2+) as a cofactor.

The protein resides in the cytoplasm. It carries out the reaction tRNA(Ala) + L-alanine + ATP = L-alanyl-tRNA(Ala) + AMP + diphosphate. Its function is as follows. Catalyzes the attachment of alanine to tRNA(Ala) in a two-step reaction: alanine is first activated by ATP to form Ala-AMP and then transferred to the acceptor end of tRNA(Ala). Also edits incorrectly charged Ser-tRNA(Ala) and Gly-tRNA(Ala) via its editing domain. This chain is Alanine--tRNA ligase, found in Synechococcus elongatus (strain ATCC 33912 / PCC 7942 / FACHB-805) (Anacystis nidulans R2).